The sequence spans 121 residues: Small ribosomal subunit protein uS13 (121 aa).

The disordered stretch occupies residues 93–121 (RHLPVRGQNTKNNARTRKGPAVSIAGKKK).

Belongs to the universal ribosomal protein uS13 family. Part of the 30S ribosomal subunit. Forms a loose heterodimer with protein S19. Forms two bridges to the 50S subunit in the 70S ribosome.

In terms of biological role, located at the top of the head of the 30S subunit, it contacts several helices of the 16S rRNA. In the 70S ribosome it contacts the 23S rRNA (bridge B1a) and protein L5 of the 50S subunit (bridge B1b), connecting the 2 subunits; these bridges are implicated in subunit movement. Contacts the tRNAs in the A and P-sites. The chain is Small ribosomal subunit protein uS13 from Ligilactobacillus salivarius (strain UCC118) (Lactobacillus salivarius).